The following is a 761-amino-acid chain: MALPALGLDPWSLLGLFLFQLLQLLLPTTTAGGGGQGPMPRVRYYAGDERRALSFFHQKGLQDFDTLLLSGDGNTLYVGAREAILALDIQDPGVPRLKNMIPWPASDRKKSECAFKKKSNETQCFNFIRVLVSYNVTHLYTCGTFAFSPACTFIELQDSYLLPISEDKVMEGKGQSPFDPAHKHTAVLVDGMLYSGTMNNFLGSEPILMRTLGSQPVLKTDNFLRWLHHDASFVAAIPSTQVVYFFFEETASEFDFFERLHTSRVARVCKNDVGGEKLLQKKWTTFLKAQLLCTQPGQLPFNVIRHAVLLPADSPTAPHIYAVFTSQWQVGGTRSSAVCAFSLLDIERVFKGKYKELNKETSRWTTYRGPETNPRPGSCSVGPSSDKALTFMKDHFLMDEQVVGTPLLVKSGVEYTRLAVETAQGLDGHSHLVMYLGTTTGSLHKAVVSGDSSAHLVEEIQLFPDPEPVRNLQLAPTQGAVFVGFSGGVWRVPRANCSVYESCVDCVLARDPHCAWDPESRTCCLLSAPNLNSWKQDMERGNPEWACASGPMSRSLRPQSRPQIIKEVLAVPNSILELPCPHLSALASYYWSHGPAAVPEASSTVYNGSLLLIVQDGVGGLYQCWATENGFSYPVISYWVDSQDQTLALDPELAGIPREHVKVPLTRVSGGAALAAQQSYWPHFVTVTVLFALVLSGALIILVASPLRALRARGKVQGCETLRPGEKAPLSREQHLQSPKECRTSASDVDADNNCLGTEVA.

Positions 1–32 (MALPALGLDPWSLLGLFLFQLLQLLLPTTTAG) are cleaved as a signal peptide. Residues 33 to 683 (GGGQGPMPRV…LAAQQSYWPH (651 aa)) lie on the Extracellular side of the membrane. The region spanning 36 to 494 (QGPMPRVRYY…FSGGVWRVPR (459 aa)) is the Sema domain. Cysteine 113 and cysteine 124 form a disulfide bridge. 2 N-linked (GlcNAc...) asparagine glycosylation sites follow: asparagine 120 and asparagine 135. Cystine bridges form between cysteine 142–cysteine 151, cysteine 269–cysteine 379, and cysteine 293–cysteine 339. N-linked (GlcNAc...) asparagine glycosylation occurs at asparagine 496. The PSI domain occupies 496–548 (NCSVYESCVDCVLARDPHCAWDPESRTCCLLSAPNLNSWKQDMERGNPEWACA). 3 cysteine pairs are disulfide-bonded: cysteine 497–cysteine 514, cysteine 506–cysteine 523, and cysteine 580–cysteine 624. Positions 573 to 631 (NSILELPCPHLSALASYYWSHGPAAVPEASSTVYNGSLLLIVQDGVGGLYQCWATENGF) constitute an Ig-like C2-type domain. An N-linked (GlcNAc...) asparagine glycan is attached at asparagine 607. The chain crosses the membrane as a helical span at residues 684-704 (FVTVTVLFALVLSGALIILVA). The Cytoplasmic segment spans residues 705 to 761 (SPLRALRARGKVQGCETLRPGEKAPLSREQHLQSPKECRTSASDVDADNNCLGTEVA). A disordered region spans residues 722 to 749 (LRPGEKAPLSREQHLQSPKECRTSASDV). The span at 723-743 (RPGEKAPLSREQHLQSPKECR) shows a compositional bias: basic and acidic residues.

This sequence belongs to the semaphorin family. In terms of assembly, interacts with PLXNB1, PLXNB2, PLXNB3, PLXND1 and TIMD2.

It localises to the cell membrane. Cell surface receptor for PLXNB1, PLXNB2, PLXNB3 and PLXND1 that plays an important role in cell-cell signaling. Regulates glutamatergic and GABAergic synapse development. Promotes the development of inhibitory synapses in a PLXNB1-dependent manner and promotes the development of excitatory synapses in a PLXNB2-dependent manner. Plays a role in priming antigen-specific T-cells, promotes differentiation of Th1 T-helper cells, and thereby contributes to adaptive immunity. Promotes phosphorylation of TIMD2. Inhibits angiogenesis. Promotes axon growth cone collapse. Inhibits axonal extension by providing local signals to specify territories inaccessible for growing axons. This chain is Semaphorin-4A (SEMA4A), found in Homo sapiens (Human).